A 381-amino-acid polypeptide reads, in one-letter code: Chaperone protein DnaJ (381 aa).

Positions 4–69 (DYYEILGVTR…QKRAAYDRFG (66 aa)) constitute a J domain. The CR-type zinc-finger motif lies at 135 to 213 (GKTAQINIPS…CQGTRRVEKN (79 aa)). 8 residues coordinate Zn(2+): cysteine 148, cysteine 151, cysteine 165, cysteine 168, cysteine 187, cysteine 190, cysteine 201, and cysteine 204. CXXCXGXG motif repeat units follow at residues 148 to 155 (CDACEGSG), 165 to 172 (CGTCHGAG), 187 to 194 (CPVCHGRG), and 201 to 208 (CPKCQGTR).

The protein belongs to the DnaJ family. As to quaternary structure, homodimer. Zn(2+) serves as cofactor.

The protein resides in the cytoplasm. Participates actively in the response to hyperosmotic and heat shock by preventing the aggregation of stress-denatured proteins and by disaggregating proteins, also in an autonomous, DnaK-independent fashion. Unfolded proteins bind initially to DnaJ; upon interaction with the DnaJ-bound protein, DnaK hydrolyzes its bound ATP, resulting in the formation of a stable complex. GrpE releases ADP from DnaK; ATP binding to DnaK triggers the release of the substrate protein, thus completing the reaction cycle. Several rounds of ATP-dependent interactions between DnaJ, DnaK and GrpE are required for fully efficient folding. Also involved, together with DnaK and GrpE, in the DNA replication of plasmids through activation of initiation proteins. In Bartonella henselae (strain ATCC 49882 / DSM 28221 / CCUG 30454 / Houston 1) (Rochalimaea henselae), this protein is Chaperone protein DnaJ.